The chain runs to 484 residues: tRNA sulfurtransferase (484 aa).

The region spanning 61-165 (TLLVELLGRI…NDKMMLIKAR (105 aa)) is the THUMP domain. Residues 183–184 (LI), lysine 265, glycine 287, and glutamine 296 contribute to the ATP site. The cysteines at positions 344 and 456 are disulfide-linked. One can recognise a Rhodanese domain in the interval 404–484 (LSANEVILDI…DNVKVLNKIS (81 aa)). Cysteine 456 serves as the catalytic Cysteine persulfide intermediate.

Belongs to the ThiI family.

The protein resides in the cytoplasm. The enzyme catalyses [ThiI sulfur-carrier protein]-S-sulfanyl-L-cysteine + a uridine in tRNA + 2 reduced [2Fe-2S]-[ferredoxin] + ATP + H(+) = [ThiI sulfur-carrier protein]-L-cysteine + a 4-thiouridine in tRNA + 2 oxidized [2Fe-2S]-[ferredoxin] + AMP + diphosphate. It catalyses the reaction [ThiS sulfur-carrier protein]-C-terminal Gly-Gly-AMP + S-sulfanyl-L-cysteinyl-[cysteine desulfurase] + AH2 = [ThiS sulfur-carrier protein]-C-terminal-Gly-aminoethanethioate + L-cysteinyl-[cysteine desulfurase] + A + AMP + 2 H(+). It functions in the pathway cofactor biosynthesis; thiamine diphosphate biosynthesis. In terms of biological role, catalyzes the ATP-dependent transfer of a sulfur to tRNA to produce 4-thiouridine in position 8 of tRNAs, which functions as a near-UV photosensor. Also catalyzes the transfer of sulfur to the sulfur carrier protein ThiS, forming ThiS-thiocarboxylate. This is a step in the synthesis of thiazole, in the thiamine biosynthesis pathway. The sulfur is donated as persulfide by IscS. The sequence is that of tRNA sulfurtransferase from Histophilus somni (strain 2336) (Haemophilus somnus).